Here is a 141-residue protein sequence, read N- to C-terminus: Large ribosomal subunit protein uL11 (141 aa).

The protein belongs to the universal ribosomal protein uL11 family. In terms of assembly, part of the ribosomal stalk of the 50S ribosomal subunit. Interacts with L10 and the large rRNA to form the base of the stalk. L10 forms an elongated spine to which L12 dimers bind in a sequential fashion forming a multimeric L10(L12)X complex. Post-translationally, one or more lysine residues are methylated.

Its function is as follows. Forms part of the ribosomal stalk which helps the ribosome interact with GTP-bound translation factors. The protein is Large ribosomal subunit protein uL11 of Natranaerobius thermophilus (strain ATCC BAA-1301 / DSM 18059 / JW/NM-WN-LF).